The sequence spans 221 residues: Thymidylate kinase (221 aa).

12–19 contributes to the ATP binding site; the sequence is GIDGAGKS.

It belongs to the thymidylate kinase family.

It carries out the reaction dTMP + ATP = dTDP + ADP. Its function is as follows. Phosphorylation of dTMP to form dTDP in both de novo and salvage pathways of dTTP synthesis. The protein is Thymidylate kinase of Paracidovorax citrulli (strain AAC00-1) (Acidovorax citrulli).